Reading from the N-terminus, the 78-residue chain is Sperm-specific protein Phi-0 (78 aa).

Basic residues-rich tracts occupy residues 1-21 (MVAR…RSAA), 31-57 (AASR…KPKA), and 64-78 (VRRR…SVSK). Residues 1 to 78 (MVARRQTKKA…RRIRRASVSK (78 aa)) are disordered.

The protein localises to the nucleus. It localises to the chromosome. Its function is as follows. Involved in nuclear basic protein transition: histones are replaced by spermatid specific proteins which are themselves replaced by protamines in late spermatids. This chain is Sperm-specific protein Phi-0, found in Holothuria tubulosa (Tubular sea cucumber).